A 458-amino-acid chain; its full sequence is Argininosuccinate lyase (458 aa).

The protein belongs to the lyase 1 family. Argininosuccinate lyase subfamily.

The protein resides in the cytoplasm. The enzyme catalyses 2-(N(omega)-L-arginino)succinate = fumarate + L-arginine. It functions in the pathway amino-acid biosynthesis; L-arginine biosynthesis; L-arginine from L-ornithine and carbamoyl phosphate: step 3/3. This is Argininosuccinate lyase from Actinobacillus pleuropneumoniae serotype 5b (strain L20).